A 519-amino-acid chain; its full sequence is Glycogen synthase (519 aa).

The segment at 1 to 40 (MISAAVEPHVDAFKPDNREPLTPDFATTGKAPGAQRQHNP) is disordered. The segment covering 8-21 (PHVDAFKPDNREPL) has biased composition (basic and acidic residues). Position 57 (Lys-57) interacts with ADP-alpha-D-glucose.

Belongs to the glycosyltransferase 1 family. Bacterial/plant glycogen synthase subfamily.

The catalysed reaction is [(1-&gt;4)-alpha-D-glucosyl](n) + ADP-alpha-D-glucose = [(1-&gt;4)-alpha-D-glucosyl](n+1) + ADP + H(+). It functions in the pathway glycan biosynthesis; glycogen biosynthesis. In terms of biological role, synthesizes alpha-1,4-glucan chains using ADP-glucose. This is Glycogen synthase from Pseudomonas putida (strain ATCC 47054 / DSM 6125 / CFBP 8728 / NCIMB 11950 / KT2440).